Here is a 314-residue protein sequence, read N- to C-terminus: Methionyl-tRNA formyltransferase (314 aa).

112-115 contributes to the (6S)-5,6,7,8-tetrahydrofolate binding site; that stretch reads SLLP.

Belongs to the Fmt family.

It carries out the reaction L-methionyl-tRNA(fMet) + (6R)-10-formyltetrahydrofolate = N-formyl-L-methionyl-tRNA(fMet) + (6S)-5,6,7,8-tetrahydrofolate + H(+). Functionally, attaches a formyl group to the free amino group of methionyl-tRNA(fMet). The formyl group appears to play a dual role in the initiator identity of N-formylmethionyl-tRNA by promoting its recognition by IF2 and preventing the misappropriation of this tRNA by the elongation apparatus. In Legionella pneumophila (strain Paris), this protein is Methionyl-tRNA formyltransferase.